We begin with the raw amino-acid sequence, 271 residues long: Formamidopyrimidine-DNA glycosylase (271 aa).

Proline 2 serves as the catalytic Schiff-base intermediate with DNA. Glutamate 3 functions as the Proton donor in the catalytic mechanism. The Proton donor; for beta-elimination activity role is filled by lysine 58. DNA contacts are provided by histidine 91, arginine 110, and arginine 152. An FPG-type zinc finger spans residues 237–271 (LVYGREGQPCVHCGRPIRCETIGQRSSYFCTRCQR). Residue arginine 261 is the Proton donor; for delta-elimination activity of the active site.

This sequence belongs to the FPG family. As to quaternary structure, monomer. The cofactor is Zn(2+).

The catalysed reaction is Hydrolysis of DNA containing ring-opened 7-methylguanine residues, releasing 2,6-diamino-4-hydroxy-5-(N-methyl)formamidopyrimidine.. It carries out the reaction 2'-deoxyribonucleotide-(2'-deoxyribose 5'-phosphate)-2'-deoxyribonucleotide-DNA = a 3'-end 2'-deoxyribonucleotide-(2,3-dehydro-2,3-deoxyribose 5'-phosphate)-DNA + a 5'-end 5'-phospho-2'-deoxyribonucleoside-DNA + H(+). Involved in base excision repair of DNA damaged by oxidation or by mutagenic agents. Acts as a DNA glycosylase that recognizes and removes damaged bases. Has a preference for oxidized purines, such as 7,8-dihydro-8-oxoguanine (8-oxoG). Has AP (apurinic/apyrimidinic) lyase activity and introduces nicks in the DNA strand. Cleaves the DNA backbone by beta-delta elimination to generate a single-strand break at the site of the removed base with both 3'- and 5'-phosphates. In Syntrophotalea carbinolica (strain DSM 2380 / NBRC 103641 / GraBd1) (Pelobacter carbinolicus), this protein is Formamidopyrimidine-DNA glycosylase.